The following is a 278-amino-acid chain: MLLAHISDTHFRSQNHKLYGFIDVNAGNADVVSQLNGLRERPDAVVVSGDIVNCGRPEEYQVARQVLGALRYPLLLIPGNHDDKACFLEYLRPLCPQLGSDPQNMRYAIDDFATRLLFIDSSLAGHAKGWLTDNTVAWLEAQLSDAGDKPTAVFMHHPPLPLGNAQMDPIACENGHRLLALVERFPSLVRIFCGHNHNLTMTQYRQATIATLPATVHQVPYCHEDTRPYYDMSPPSCLMHRQVGEQWVSYQHSLAHYAGPWLYDEHISCPTDERRSPC.

Residues Asp-8, His-10, Asp-50, Asn-80, His-156, His-195, and His-197 each coordinate Fe cation.

The protein belongs to the cyclic nucleotide phosphodiesterase class-III family. Requires Fe(2+) as cofactor.

It catalyses the reaction a sn-glycero-3-phosphodiester + H2O = an alcohol + sn-glycerol 3-phosphate + H(+). The enzyme catalyses sn-glycero-3-phosphoethanolamine + H2O = ethanolamine + sn-glycerol 3-phosphate + H(+). Catalyzes the hydrolysis of the 3'-5' phosphodiester bond of glycerophosphodiesters such as glycerophosphorylethanolamine (GPE), a typical phospholipid metabolite. In Enterobacter lignolyticus (strain SCF1), this protein is Glycerophosphodiester phosphodiesterase GpdQ.